The primary structure comprises 483 residues: Protein FIZZY-RELATED 2 (483 aa).

The segment at Met1 to Asn28 is disordered. Residues Thr7–Asn28 show a composition bias toward polar residues. WD repeat units follow at residues Gln174–Leu211, Gly215–Thr254, Gly257–Ser294, Gly298–Lys337, Glu340–Ser382, Asp384–Thr425, and Gly428–Asn467.

The protein belongs to the WD repeat CDC20/Fizzy family. As to quaternary structure, associates with the APC/C complex. Interacts with CDC20-1, CDC20-2, CYCA1-1, CYCA1-2, CYCA3-4, CYCB1-1 and CYCB1-2. Binds to GIG1 and PYM. In terms of tissue distribution, expressed in seedlings, flowers, leaves and roots. Expressed in the differentiating cell files of the root elongation zone.

Its subcellular location is the nucleus. The protein operates within protein modification; protein ubiquitination. Functionally, activator protein that regulates the ubiquitin ligase activity and substrate specificity of the anaphase promoting complex/cyclosome (APC/C). Necessary and sufficient for endoreduplication and correct cell expansion. Controls meristem size by stimulating endoreduplication in the elongation zone. The polypeptide is Protein FIZZY-RELATED 2 (FZR2) (Arabidopsis thaliana (Mouse-ear cress)).